Reading from the N-terminus, the 59-residue chain is Large ribosomal subunit protein bL32 (59 aa).

Over residues 1–22 (MAVPKKKTSNSKRDSRRAHWNR) the composition is skewed to basic residues. The disordered stretch occupies residues 1-59 (MAVPKKKTSNSKRDSRRAHWNRKANLAAQRALSTGKSILTGRAKGFEYPTKDDDEDDDE).

Belongs to the bacterial ribosomal protein bL32 family.

This chain is Large ribosomal subunit protein bL32, found in Acaryochloris marina (strain MBIC 11017).